A 998-amino-acid polypeptide reads, in one-letter code: Collagen alpha-1(I) chain (998 aa).

The interval Ser1–Gly998 is disordered. The span at Gly9–Arg22 shows a compositional bias: low complexity. 11 positions are modified to 4-hydroxyproline: Pro25, Pro28, Pro30, Pro39, Pro42, Pro45, Pro59, Pro74, Pro80, Pro89, and Pro95. Basic and acidic residues predominate over residues Asn62–Glu76. The residue at position 98 (Lys98) is a 5-hydroxylysine; alternate. Lys98 carries O-linked (Gal...) hydroxylysine; alternate glycosylation. Residue Ser104 is modified to Phosphoserine. Low complexity predominate over residues Asp112–Asn128. Residues Pro122, Pro125, Pro131, Pro140, Pro146, Pro167, Pro176, Pro179, Pro206, Pro209, Pro221, Pro227, Pro236, Pro242, Pro245, and Pro260 each carry the 4-hydroxyproline modification. Positions Pro146–Ala164 are enriched in low complexity. Over residues Pro166–Phe178 the composition is skewed to pro residues. Positions Ala212 to Ser251 are enriched in low complexity. Lys263 carries the 5-hydroxylysine modification. Residues Pro269, Pro272, Pro284, Pro293, Pro308, Pro314, Pro323, and Pro329 each carry the 4-hydroxyproline modification. The segment covering Gly318–Gly327 has biased composition (gly residues). Lys338 carries the 5-hydroxylysine modification. Pro347, Pro356, Pro362, Pro368, Pro377, Pro380, Pro389, Pro398, Pro404, Pro416, Pro425, Pro434, Pro437, Pro455, Pro472, Pro478, Pro484, Pro490, Pro496, Pro502, Pro514, Pro523, Pro537, Pro543, and Pro552 each carry 4-hydroxyproline. Positions Lys371–Arg397 are enriched in low complexity. Low complexity predominate over residues Ala406–Pro425. Low complexity predominate over residues Pro484 to Gln493. Lys564 is subject to 5-hydroxylysine. 4-hydroxyproline occurs at positions 570, 585, and 591. Positions Ser597–Ala611 are enriched in low complexity. Residue Ser600 is modified to Phosphoserine. Pro612, Pro618, Pro621, Pro630, Pro636, Pro654, Pro663, and Pro672 each carry 4-hydroxyproline. The segment covering Ala624–Ala651 has biased composition (low complexity). Residues Pro653–Pro665 show a composition bias toward pro residues. Lys675 is modified (5-hydroxylysine). Over residues Ser680–Val696 the composition is skewed to low complexity. 4-hydroxyproline occurs at positions 684 and 690. Position 698 is a 3-hydroxyproline (Pro698). 4-hydroxyproline is present on residues Pro699, Pro708, Pro711, Pro732, Pro741, Pro749, Pro758, Pro776, Pro785, Pro788, Pro794, Pro809, Pro815, Pro821, Pro830, and Pro836. Over residues Glu725–Glu734 the composition is skewed to low complexity. Over residues Lys746–Pro758 the composition is skewed to low complexity. Over residues Pro808–Ala818 the composition is skewed to pro residues. 5-hydroxylysine is present on Lys845. The segment covering Pro853–Val868 has biased composition (pro residues). Pro856, Pro859, and Pro862 each carry 4-hydroxyproline. Low complexity predominate over residues Ala889 to Pro903. Positions Arg904–Ile918 are enriched in basic and acidic residues. Lys907 bears the 5-hydroxylysine mark. At Lys919 the chain carries 5-hydroxylysine; alternate. O-linked (Gal...) hydroxylysine; alternate glycosylation is present at Lys919. A 4-hydroxyproline mark is found at Pro934, Pro937, Pro955, and Pro970. Residues Pro937–Pro970 are compositionally biased toward low complexity. A 3-hydroxyproline modification is found at Pro975. Pro976 carries the 4-hydroxyproline modification. Positions Val988–Gly998 are enriched in pro residues. At Pro990 the chain carries 3-hydroxyproline. Pro991 is modified (4-hydroxyproline). The residue at position 993 (Pro993) is a 3-hydroxyproline. Pro994 carries the post-translational modification 4-hydroxyproline. Residue Pro996 is modified to 3-hydroxyproline. Residue Pro997 is modified to 4-hydroxyproline.

It belongs to the fibrillar collagen family. As to quaternary structure, trimers of one alpha 2(I) and two alpha 1(I) chains. In terms of processing, contains mostly 4-hydroxyproline. Proline residues at the third position of the tripeptide repeating unit (G-X-Y) are hydroxylated in some or all of the chains. Contains 3-hydroxyproline at a few sites. This modification occurs on the first proline residue in the sequence motif Gly-Pro-Hyp, where Hyp is 4-hydroxyproline. Post-translationally, lysine residues at the third position of the tripeptide repeating unit (G-X-Y) are 5-hydroxylated in some or all of the chains. In terms of processing, O-glycosylated on hydroxylated lysine residues. The O-linked glycan consists of a Glc-Gal disaccharide. In terms of tissue distribution, expressed in bones.

The protein localises to the secreted. It is found in the extracellular space. It localises to the extracellular matrix. In terms of biological role, type I collagen is a member of group I collagen (fibrillar forming collagen). The chain is Collagen alpha-1(I) chain from Nothrotheriops shastensis (Shasta ground sloth).